Consider the following 148-residue polypeptide: MNKHIRQQRIRELIQQEGVGNQHDLLRLLRESGIKVAQATLSRDCAELGIVRSKTHAGYRLLLGDESTGRIIKGLVGMEVTSVAANETSVIVRTLPGRAHGVGSWLDQFKSQLILGTIAGDDTVLVIPDSVQNISVLMSYIQKNLSTN.

Belongs to the ArgR family.

It is found in the cytoplasm. It functions in the pathway amino-acid biosynthesis; L-arginine biosynthesis [regulation]. In terms of biological role, regulates arginine biosynthesis genes. This chain is Arginine repressor, found in Chlorobium luteolum (strain DSM 273 / BCRC 81028 / 2530) (Pelodictyon luteolum).